A 473-amino-acid chain; its full sequence is Siroheme synthase (473 aa).

The precorrin-2 dehydrogenase /sirohydrochlorin ferrochelatase stretch occupies residues Met1–Leu203. NAD(+) contacts are provided by residues Asp22 to Val23 and Pro43 to Lys44. Ser128 carries the post-translational modification Phosphoserine. Residues Gly215–Ala473 form a uroporphyrinogen-III C-methyltransferase region. Pro224 provides a ligand contact to S-adenosyl-L-methionine. Catalysis depends on Asp247, which acts as the Proton acceptor. The active-site Proton donor is Lys269. Residues Gly300 to Asp302, Ile305, Thr330 to Ala331, Met382, and Gly411 each bind S-adenosyl-L-methionine.

In the N-terminal section; belongs to the precorrin-2 dehydrogenase / sirohydrochlorin ferrochelatase family. This sequence in the C-terminal section; belongs to the precorrin methyltransferase family.

The enzyme catalyses uroporphyrinogen III + 2 S-adenosyl-L-methionine = precorrin-2 + 2 S-adenosyl-L-homocysteine + H(+). It catalyses the reaction precorrin-2 + NAD(+) = sirohydrochlorin + NADH + 2 H(+). It carries out the reaction siroheme + 2 H(+) = sirohydrochlorin + Fe(2+). Its pathway is cofactor biosynthesis; adenosylcobalamin biosynthesis; precorrin-2 from uroporphyrinogen III: step 1/1. The protein operates within cofactor biosynthesis; adenosylcobalamin biosynthesis; sirohydrochlorin from precorrin-2: step 1/1. It functions in the pathway porphyrin-containing compound metabolism; siroheme biosynthesis; precorrin-2 from uroporphyrinogen III: step 1/1. It participates in porphyrin-containing compound metabolism; siroheme biosynthesis; siroheme from sirohydrochlorin: step 1/1. Its pathway is porphyrin-containing compound metabolism; siroheme biosynthesis; sirohydrochlorin from precorrin-2: step 1/1. Multifunctional enzyme that catalyzes the SAM-dependent methylations of uroporphyrinogen III at position C-2 and C-7 to form precorrin-2 via precorrin-1. Then it catalyzes the NAD-dependent ring dehydrogenation of precorrin-2 to yield sirohydrochlorin. Finally, it catalyzes the ferrochelation of sirohydrochlorin to yield siroheme. In Pseudoalteromonas translucida (strain TAC 125), this protein is Siroheme synthase.